A 541-amino-acid chain; its full sequence is Tyrosine-protein kinase Yes (541 aa).

Over residues M1 to N20 the composition is skewed to basic and acidic residues. Residues M1 to P43 are disordered. G2 is lipidated: N-myristoyl glycine. Residue C3 is the site of S-palmitoyl cysteine; in membrane form attachment. Residues S26 to S37 are compositionally biased toward low complexity. In terms of domain architecture, SH3 spans G89–S150. In terms of domain architecture, SH2 spans W156–C253. The 254-residue stretch at L275–F528 folds into the Protein kinase domain. ATP-binding positions include L281–V289 and K303. Catalysis depends on D394, which acts as the Proton acceptor. Y424 carries the phosphotyrosine; by autocatalysis modification. Phosphotyrosine; by CSK is present on Y535.

It belongs to the protein kinase superfamily. Tyr protein kinase family. SRC subfamily. In terms of processing, autophosphorylation at Tyr-424 maintains enzyme activity. Palmitoylation at Cys-3 promotes membrane localization.

The protein localises to the cell membrane. It localises to the cytoplasm. The protein resides in the cytoskeleton. Its subcellular location is the microtubule organizing center. It is found in the centrosome. The protein localises to the cytosol. It localises to the cell junction. The catalysed reaction is L-tyrosyl-[protein] + ATP = O-phospho-L-tyrosyl-[protein] + ADP + H(+). Its function is as follows. Non-receptor protein tyrosine kinase that is involved in the regulation of cell growth and survival, apoptosis, cell-cell adhesion, cytoskeleton remodeling, differentiation, G2/M progression and cytokinesis. The polypeptide is Tyrosine-protein kinase Yes (YES1) (Gallus gallus (Chicken)).